The following is an 835-amino-acid chain: Microcephalin (835 aa).

One can recognise a BRCT 1 domain in the interval 1–93; it reads MAAPILKDVV…AHIDESLFPA (93 aa). A phosphoserine mark is found at Ser-279, Ser-287, Ser-296, and Ser-333. Disordered stretches follow at residues 332–376 and 417–442; these read LSPT…RKRS and SPDN…PAQF. At Thr-335 the chain carries Phosphothreonine. Residues 343-361 show a composition bias toward basic residues; it reads LLIHSRPRSSSVKRKRVSH. Residue Ser-548 is modified to Phosphoserine. Residues 555 to 583 form a disordered region; the sequence is AVDLKSTQNKGTTSKISNSSEGEAQSEHE. The span at 559 to 577 shows a compositional bias: polar residues; sequence KSTQNKGTTSKISNSSEGE. BRCT domains are found at residues 640–730 and 751–833; these read SGRG…PFEL and YRGT…NYLL.

Interacts with CDC27 and maybe other components of the APC/C complex. Interacts with histone variant H2AX under DNA damage conditions.

It localises to the cytoplasm. The protein localises to the cytoskeleton. It is found in the microtubule organizing center. The protein resides in the centrosome. Its function is as follows. Implicated in chromosome condensation and DNA damage induced cellular responses. May play a role in neurogenesis and regulation of the size of the cerebral cortex. This chain is Microcephalin, found in Pan troglodytes (Chimpanzee).